Reading from the N-terminus, the 222-residue chain is Glutathione S-transferase A4 (222 aa).

M1 carries the N-acetylmethionine modification. In terms of domain architecture, GST N-terminal spans 3-83 (AKPKLYYFNG…YLAAKYNLYG (81 aa)). Glutathione is bound by residues Y9, 53–55 (GQV), and 66–68 (TQT). The 124-residue stretch at 85-208 (DLKERVRIDM…QPGSQRKPPP (124 aa)) folds into the GST C-terminal domain.

It belongs to the GST superfamily. Alpha family. As to quaternary structure, homodimer. In terms of processing, the N-terminus is blocked.

It localises to the cytoplasm. It catalyses the reaction RX + glutathione = an S-substituted glutathione + a halide anion + H(+). In terms of biological role, conjugation of reduced glutathione to a wide number of exogenous and endogenous hydrophobic electrophiles. The polypeptide is Glutathione S-transferase A4 (Gsta4) (Mus musculus (Mouse)).